The chain runs to 46 residues: Protein PsbN (46 aa).

Residues 7–27 form a helical membrane-spanning segment; the sequence is ALSVAIGVLAVLFGLTGFGVY.

This sequence belongs to the PsbN family.

Its subcellular location is the cellular thylakoid membrane. May play a role in photosystem I and II biogenesis. This is Protein PsbN from Synechococcus sp. (strain CC9605).